The following is a 230-amino-acid chain: Protein GrpE (230 aa).

Disordered regions lie at residues methionine 1 to alanine 26 and glycine 209 to alanine 230. The span at asparagine 221–alanine 230 shows a compositional bias: polar residues.

The protein belongs to the GrpE family. Homodimer.

It is found in the cytoplasm. Participates actively in the response to hyperosmotic and heat shock by preventing the aggregation of stress-denatured proteins, in association with DnaK and GrpE. It is the nucleotide exchange factor for DnaK and may function as a thermosensor. Unfolded proteins bind initially to DnaJ; upon interaction with the DnaJ-bound protein, DnaK hydrolyzes its bound ATP, resulting in the formation of a stable complex. GrpE releases ADP from DnaK; ATP binding to DnaK triggers the release of the substrate protein, thus completing the reaction cycle. Several rounds of ATP-dependent interactions between DnaJ, DnaK and GrpE are required for fully efficient folding. This chain is Protein GrpE, found in Brucella suis biovar 1 (strain 1330).